The following is a 362-amino-acid chain: Nuclear hormone receptor family member nhr-77 (362 aa).

Positions aspartate 8–glutamine 82 form a DNA-binding region, nuclear receptor. NR C4-type zinc fingers lie at residues cysteine 11–cysteine 32 and cysteine 48–cysteine 69. An NR LBD domain is found at glutamate 145–phenylalanine 362.

Belongs to the nuclear hormone receptor family.

The protein resides in the nucleus. Functionally, orphan nuclear receptor. The chain is Nuclear hormone receptor family member nhr-77 (nhr-77) from Caenorhabditis elegans.